The primary structure comprises 247 residues: ATP synthase subunit a, chloroplastic (247 aa).

Transmembrane regions (helical) follow at residues 38–58 (QVLITSWVVIAILLGSAALAV), 95–115 (VPFIGTIFLFIFVSNWSGALL), 134–154 (INTTVALALLTSVAYFYAGLA), 199–219 (LVVVVLVSLVPSVVPIPVMFL), and 220–240 (GLFTSGIQALIFATLAAAYIG).

The protein belongs to the ATPase A chain family. As to quaternary structure, F-type ATPases have 2 components, CF(1) - the catalytic core - and CF(0) - the membrane proton channel. CF(1) has five subunits: alpha(3), beta(3), gamma(1), delta(1), epsilon(1). CF(0) has four main subunits: a, b, b' and c.

The protein localises to the plastid. It localises to the chloroplast thylakoid membrane. In terms of biological role, key component of the proton channel; it plays a direct role in the translocation of protons across the membrane. This is ATP synthase subunit a, chloroplastic from Trachelium caeruleum (Blue throatwort).